A 501-amino-acid polypeptide reads, in one-letter code: Na(+)/H(+) antiporter NhaB (501 aa).

The next 11 membrane-spanning stretches (helical) occupy residues 24–44 (VILLFLVINPIVMYLLGPGVA), 46–66 (WLLIGEFIFTLAMALKCYPLL), 90–110 (VLTNFPVILLLMFMVAGIYFM), 145–165 (FLDALTVTAVIISVAVGFFSV), 206–226 (LLMHGAIGTALGGVATMVGEP), 239–259 (FAGFFLHMAPVSIPVLFAGLA), 302–319 (ALWIQAVAAVILVFGLAF), 351–371 (FQESLPFTSLLVVFFAVVAVI), 395–415 (MFFIANGLLSMISDNVFVATV), 450–470 (VATPNGQAAFLFLLTSAIAPL), and 478–498 (MVIMALPYTIVMGGVGLYMVT).

It belongs to the NhaB Na(+)/H(+) (TC 2.A.34) antiporter family.

It is found in the cell inner membrane. It catalyses the reaction 2 Na(+)(in) + 3 H(+)(out) = 2 Na(+)(out) + 3 H(+)(in). Functionally, na(+)/H(+) antiporter that extrudes sodium in exchange for external protons. The chain is Na(+)/H(+) antiporter NhaB from Marinobacter nauticus (strain ATCC 700491 / DSM 11845 / VT8) (Marinobacter aquaeolei).